A 131-amino-acid chain; its full sequence is Small ribosomal subunit protein uS12 (131 aa).

3-methylthioaspartic acid is present on Asp-89.

Belongs to the universal ribosomal protein uS12 family. In terms of assembly, part of the 30S ribosomal subunit. Contacts proteins S8 and S17. May interact with IF1 in the 30S initiation complex.

Its function is as follows. With S4 and S5 plays an important role in translational accuracy. In terms of biological role, interacts with and stabilizes bases of the 16S rRNA that are involved in tRNA selection in the A site and with the mRNA backbone. Located at the interface of the 30S and 50S subunits, it traverses the body of the 30S subunit contacting proteins on the other side and probably holding the rRNA structure together. The combined cluster of proteins S8, S12 and S17 appears to hold together the shoulder and platform of the 30S subunit. This chain is Small ribosomal subunit protein uS12, found in Campylobacter concisus (strain 13826).